A 1055-amino-acid chain; its full sequence is SMC5-SMC6 complex localization factor protein 1 (1055 aa).

2 BRCT domains span residues E2–G80 and P121–K199. Residues K312–T332 form a disordered region. Residues K318 to T332 show a composition bias toward basic and acidic residues. The interval P407 to S1055 is NSE5-like domain; mediates interaction with SLF2. ANK repeat units follow at residues K804–V834, A838–L867, and D872–L901. Residue K929 forms a Glycyl lysine isopeptide (Lys-Gly) (interchain with G-Cter in SUMO2) linkage.

As to quaternary structure, interacts (via N-terminus) with SLF2; this interaction links RAD18 to the SMC5-SMC6 complex. Interacts (via BRCT domains) with RAD18; this interaction occurs in a SLF2-independent manner. Interacts with SMC6. Interacts (via BRCT domains) with RAD18 (via C-terminus and phosphorylated form); this interaction is required for efficient repair of UV-induced DNA damage.

It is found in the nucleus. Its subcellular location is the cytoplasm. The protein resides in the cytoskeleton. The protein localises to the microtubule organizing center. It localises to the centrosome. Functionally, plays a role in the DNA damage response (DDR) pathway by regulating postreplication repair of UV-damaged DNA and genomic stability maintenance. The SLF1-SLF2 complex acts to link RAD18 with the SMC5-SMC6 complex at replication-coupled interstrand cross-links (ICL) and DNA double-strand breaks (DSBs) sites on chromatin during DNA repair in response to stalled replication forks. Promotes the recruitment of SLF2 and the SMC5-SMC6 complex to DNA lesions. This Bos taurus (Bovine) protein is SMC5-SMC6 complex localization factor protein 1.